We begin with the raw amino-acid sequence, 132 residues long: Protein NrdI (132 aa).

It belongs to the NrdI family.

Functionally, probably involved in ribonucleotide reductase function. In Staphylococcus aureus (strain Mu3 / ATCC 700698), this protein is Protein NrdI.